Here is a 471-residue protein sequence, read N- to C-terminus: Secretogranin-3 (471 aa).

Residues methionine 1–alanine 22 form the signal peptide. Disordered stretches follow at residues proline 24–leucine 45, threonine 89–valine 108, and lysine 345–alanine 404. Residues glycine 28 to leucine 45 are compositionally biased toward basic and acidic residues. Serine 40 carries the phosphoserine modification. A glycan (O-linked (Xyl...) (chondroitin sulfate) serine) is linked at serine 40. Basic and acidic residues-rich tracts occupy residues lysine 345–serine 355 and lysine 364–alanine 404. Residue serine 365 is modified to Phosphoserine.

Interacts with CHGA. Interacts with secretogranin II/SCG2. Interacts (via C-terminus) with CPE. In terms of tissue distribution, expressed in various brain areas, with highest levels in the arcuate nucleus and the lateral hypothalamic area, as well as the paraventricular nucleus and the ventromedial hypothalamus (at protein level).

It is found in the cytoplasmic vesicle. The protein resides in the secretory vesicle. The protein localises to the secretory vesicle membrane. It localises to the secreted. Its function is as follows. Member of the granin protein family that regulates the biogenesis of secretory granules. Acts as a sorting receptor for intragranular proteins including chromogranin A/CHGA. May also play a role in angiogenesis. Promotes endothelial proliferation, migration and tube formation through MEK/ERK signaling pathway. This is Secretogranin-3 (Scg3) from Mus musculus (Mouse).